The following is a 124-amino-acid chain: Phosphoribosyl-ATP pyrophosphatase (124 aa).

The protein belongs to the PRA-PH family.

The protein resides in the cytoplasm. It catalyses the reaction 1-(5-phospho-beta-D-ribosyl)-ATP + H2O = 1-(5-phospho-beta-D-ribosyl)-5'-AMP + diphosphate + H(+). The protein operates within amino-acid biosynthesis; L-histidine biosynthesis; L-histidine from 5-phospho-alpha-D-ribose 1-diphosphate: step 2/9. The protein is Phosphoribosyl-ATP pyrophosphatase of Ralstonia pickettii (strain 12J).